The chain runs to 296 residues: Fructose-bisphosphate aldolase class 1 (296 aa).

The Proton acceptor role is filled by Glu175. The active-site Schiff-base intermediate with dihydroxyacetone-P is Lys212.

It belongs to the class I fructose-bisphosphate aldolase family.

The enzyme catalyses beta-D-fructose 1,6-bisphosphate = D-glyceraldehyde 3-phosphate + dihydroxyacetone phosphate. It functions in the pathway carbohydrate degradation; glycolysis; D-glyceraldehyde 3-phosphate and glycerone phosphate from D-glucose: step 4/4. The chain is Fructose-bisphosphate aldolase class 1 (fda) from Staphylococcus carnosus (strain TM300).